A 347-amino-acid polypeptide reads, in one-letter code: MSTEVRLTQYSHGAGCGCKISPKVLETILHSEQEKFLDPHLLVGNETRDDAAVYDIGNGTGIISTTDFFMPIVDDPFDFGRIAATNAISDIYAMGGKPIMAIAILGWPIDKLAPEIARKVIEGGRAACKEAGIVLAGGHSIDAPEPIFGLAVTGIVNIDRVKQNSAAKVGSQLFLTKPLGIGVLTTAEKKGLLLPEHQGIAIETMCRLNKLGMDFAEVAGITAMTDVTGFGLLGHLSEICAGSGVQATLHFAKVPKLPEVESYIAKGCVPGGTGRNFDSYGHLIGEMTELQRKLLCDPQTSGGLLLAVLPEAMDEVKAIARCHGIELTAIGELSEQQSGRVLIEVNE.

Cys16 is an active-site residue. ATP-binding positions include Lys19 and 47–49 (TRD). Asp50 lines the Mg(2+) pocket. ATP is bound by residues Asp67, Asp90, and 138–140 (GHS). Mg(2+) is bound at residue Asp90. Asp226 is a Mg(2+) binding site.

Belongs to the selenophosphate synthase 1 family. Class I subfamily. As to quaternary structure, homodimer. Mg(2+) serves as cofactor.

The enzyme catalyses hydrogenselenide + ATP + H2O = selenophosphate + AMP + phosphate + 2 H(+). Its function is as follows. Synthesizes selenophosphate from selenide and ATP. The sequence is that of Selenide, water dikinase from Photorhabdus laumondii subsp. laumondii (strain DSM 15139 / CIP 105565 / TT01) (Photorhabdus luminescens subsp. laumondii).